We begin with the raw amino-acid sequence, 361 residues long: 3-dehydroquinate synthase (361 aa).

Residues 69-74, 103-107, 127-128, K140, K149, and 167-170 contribute to the NAD(+) site; these read DGEEYK, GVIGD, TT, and TLDT. Residues E182, H245, and H262 each contribute to the Zn(2+) site.

This sequence belongs to the sugar phosphate cyclases superfamily. Dehydroquinate synthase family. The cofactor is Co(2+). It depends on Zn(2+) as a cofactor. NAD(+) is required as a cofactor.

The protein resides in the cytoplasm. It carries out the reaction 7-phospho-2-dehydro-3-deoxy-D-arabino-heptonate = 3-dehydroquinate + phosphate. It functions in the pathway metabolic intermediate biosynthesis; chorismate biosynthesis; chorismate from D-erythrose 4-phosphate and phosphoenolpyruvate: step 2/7. Functionally, catalyzes the conversion of 3-deoxy-D-arabino-heptulosonate 7-phosphate (DAHP) to dehydroquinate (DHQ). This is 3-dehydroquinate synthase from Thioalkalivibrio sulfidiphilus (strain HL-EbGR7).